Reading from the N-terminus, the 294-residue chain is UDP-3-O-acyl-N-acetylglucosamine deacetylase (294 aa).

Zn(2+)-binding residues include His75, His232, and Asp236. His259 (proton donor) is an active-site residue.

The protein belongs to the LpxC family. The cofactor is Zn(2+).

It carries out the reaction a UDP-3-O-[(3R)-3-hydroxyacyl]-N-acetyl-alpha-D-glucosamine + H2O = a UDP-3-O-[(3R)-3-hydroxyacyl]-alpha-D-glucosamine + acetate. It functions in the pathway glycolipid biosynthesis; lipid IV(A) biosynthesis; lipid IV(A) from (3R)-3-hydroxytetradecanoyl-[acyl-carrier-protein] and UDP-N-acetyl-alpha-D-glucosamine: step 2/6. Its function is as follows. Catalyzes the hydrolysis of UDP-3-O-myristoyl-N-acetylglucosamine to form UDP-3-O-myristoylglucosamine and acetate, the committed step in lipid A biosynthesis. The chain is UDP-3-O-acyl-N-acetylglucosamine deacetylase from Campylobacter jejuni (strain RM1221).